Consider the following 457-residue polypeptide: Sensor protein CpxA (457 aa).

The Cytoplasmic segment spans residues 1 to 7 (MIGSLTA). A helical membrane pass occupies residues 8–29 (RIFAIFWLTLALVLMLVLMLPK). Topologically, residues 30-163 (LDSRQMTELL…SDFINLLFDR (134 aa)) are periplasmic. A helical membrane pass occupies residues 164 to 184 (PLLLLIVTMLVSTPLLLWLAW). The region spanning 185-237 (SLAKPARKLKNAADEVAQGNLRQHPELEAGPQEFLAAGASFNQMVTALERMMT) is the HAMP domain. Over 185-457 (SLAKPARKLK…VIWLPLYKRS (273 aa)) the chain is Cytoplasmic. The 211-residue stretch at 245–455 (DISHELRTPL…RLVIWLPLYK (211 aa)) folds into the Histidine kinase domain. The residue at position 248 (histidine 248) is a Phosphohistidine; by autocatalysis.

It localises to the cell inner membrane. The catalysed reaction is ATP + protein L-histidine = ADP + protein N-phospho-L-histidine.. This protein is involved in several diverse cellular processes, such as the functioning of acetohydroxyacid synthetase I, in the biosynthesis of isoleucine and valine, the TraJ protein activation activity for tra gene expression in F plasmid, and the synthesis, translocation, or stability of cell envelope proteins. Activates CpxR by phosphorylation. The sequence is that of Sensor protein CpxA (cpxA) from Escherichia coli O157:H7.